The primary structure comprises 1086 residues: NAD(P) transhydrogenase, mitochondrial (1086 aa).

A mitochondrion-targeting transit peptide spans 1–43; that stretch reads MANLLKTVVTGCSCPFLSNLGSCKVLPGKKNFLRTFHTHRILW. The Mitochondrial matrix segment spans residues 44–474; that stretch reads CSAPVKPGIP…TITPFRKTMT (431 aa). N6-acetyllysine is present on lysine 70. Lysine 117 carries the N6-succinyllysine modification. NAD(+) is bound at residue 182–184; it reads RVT. The residue at position 224 (lysine 224) is an N6-succinyllysine. Residues valine 237, 257-259, and glycine 287 contribute to the NAD(+) site; that span reads DTR. At lysine 294 the chain carries N6-succinyllysine. NAD(+)-binding residues include glutamate 300 and leucine 319. Lysine 331 bears the N6-succinyllysine mark. Position 397 is an N6-acetyllysine (lysine 397). The next 4 helical transmembrane spans lie at 475–493, 501–521, 527–546, and 558–578; these read SASVYTAGLTGILGLGIAA, MVTTFGLAGIVGYHTVWGVTP, LMSVTNAISGLTAVGGLVLM, and GLAALATFISSVNIAGGFLVT. Topologically, residues 579 to 595 are mitochondrial matrix; that stretch reads QRMLDMFKRPTDPPEYN. The next 5 membrane-spanning stretches (helical) occupy residues 596–616, 622–642, 646–666, 672–691, and 702–722; these read YLYLLPAGTFVGGYLASLYSG, IMYLGSGLCCVGALAGLSTQG, LGNALGMIGVAGGLAATLGGL, LLAQMSGAMALGGTIGLTIA, and LVAAFHSLVGLAAVLTCIAEY. Residues 723–739 are Cytoplasmic-facing; sequence IIEYPHFATDAAANLTK. Transmembrane regions (helical) follow at residues 740–760, 778–797, 801–819, 833–853, and 857–879; these read IVAYLGTYIGGVTFSGSLVAY, HLLNAGLLAGSVGGIIPFMM, FTTGITCLGSVSALSAVMG, VVITVLNSYSGWALCAEGFLL, and LLTIVGALIGSSGAILSYIMCVA. Residues 880–1086 lie on the Mitochondrial matrix side of the membrane; sequence MNRSLANVIL…QAKVRESYQK (207 aa). NADP(+) is bound by residues tyrosine 933, 965 to 970, 1009 to 1011, 1026 to 1027, 1042 to 1049, and 1068 to 1069; these read VAGRMP, NDT, GM, KRSLGVGY, and DA. Lysine 1079 bears the N6-succinyllysine mark.

It in the N-terminal section; belongs to the AlaDH/PNT family. This sequence in the C-terminal section; belongs to the PNT beta subunit family. Homodimer.

The protein resides in the mitochondrion inner membrane. The catalysed reaction is NAD(+) + NADPH + H(+)(in) = NADH + NADP(+) + H(+)(out). Functionally, the transhydrogenation between NADH and NADP is coupled to respiration and ATP hydrolysis and functions as a proton pump across the membrane. May play a role in reactive oxygen species (ROS) detoxification in the adrenal gland. The sequence is that of NAD(P) transhydrogenase, mitochondrial (NNT) from Bos taurus (Bovine).